A 423-amino-acid chain; its full sequence is Transcription factor bHLH14 (423 aa).

The tract at residues 192–243 (GKTTKHTNQTGSYPKPAVSDHSKSGNQQFGSERKRRRKLETTRVAAATKEKH) is disordered. The bHLH domain maps to 245–294 (PAVLSHVEAEKQRREKLNHRFYALRAIVPKVSRMDKASLLSDAVSYIESL). Residues 312–343 (ETDKLDNSSSNTSPSSVEYQVNQKPSKSNRGS) are disordered. Over residues 318 to 327 (NSSSNTSPSS) the composition is skewed to low complexity. Residues 328–342 (VEYQVNQKPSKSNRG) are compositionally biased toward polar residues.

In terms of assembly, homodimer.

It localises to the nucleus. This chain is Transcription factor bHLH14 (BHLH14), found in Arabidopsis thaliana (Mouse-ear cress).